Consider the following 226-residue polypeptide: Methylamine utilization ferredoxin-type protein MauM (226 aa).

4Fe-4S ferredoxin-type domains follow at residues 59–87 (PEPE…LASW), 95–127 (TPYF…PLLT), 136–172 (VAVL…LKQI), and 180–211 (QIPT…LLPR). The [4Fe-4S] cluster site is built by C67, C70, C73, C77, C105, C108, C113, C117, C145, C153, C156, C160, C189, C192, C195, and C199.

Its pathway is one-carbon metabolism; methylamine degradation. Functionally, involved in electron transfer. The chain is Methylamine utilization ferredoxin-type protein MauM (mauM) from Methylophilus methylotrophus (Bacterium W3A1).